We begin with the raw amino-acid sequence, 103 residues long: MASFSLSILVFFFSALVLVPQGFAEYYLYPAYRPPQTKPPVNKPSHKEPPVNKPPHKEPPVHKPPHKDPPVNKPPQKESPVHKPPRKESPTHRHPPAEDNIHF.

The N-terminal stretch at 1-24 (MASFSLSILVFFFSALVLVPQGFA) is a signal peptide. 2 tandem repeats follow at residues 34 to 38 (PPQTK) and 39 to 43 (PPVNK). An 11 X 5 AA approximate tandem repeats of P-P-[QVHR]-[TNKH]-[KED] region spans residues 34-88 (PPQTKPPVNKPSHKEPPVNKPPHKEPPVHKPPHKDPPVNKPPQKESPVHKPPRKE). The tract at residues 34–103 (PPQTKPPVNK…HPPAEDNIHF (70 aa)) is disordered. The stretch at 44 to 48 (PSHKE) is one 3; approximate repeat. Basic and acidic residues predominate over residues 45–103 (SHKEPPVNKPPHKEPPVHKPPHKDPPVNKPPQKESPVHKPPRKESPTHRHPPAEDNIHF). 6 repeat units span residues 49–53 (PPVNK), 54–58 (PPHKE), 59–63 (PPVHK), 64–68 (PPHKD), 69–73 (PPVNK), and 74–78 (PPQKE). Residues 79–83 (SPVHK) form a 10; approximate repeat. Copy 11 of the repeat occupies 84–88 (PPRKE).

Belongs to the plant proline-rich protein superfamily. ENOD12 family. As to expression, root nodules.

It is found in the secreted. The protein localises to the cell wall. Functionally, involved in the infection process during the plant-rhizobium interaction. This is Early nodulin-12 (ENOD12) from Medicago truncatula (Barrel medic).